We begin with the raw amino-acid sequence, 404 residues long: L-cysteine:1D-myo-inositol 2-amino-2-deoxy-alpha-D-glucopyranoside ligase (404 aa).

Residue cysteine 47 participates in Zn(2+) binding. L-cysteinyl-5'-AMP contacts are provided by residues 47–50 (CGIT), threonine 62, and 85–87 (NIT). The 'HIGH' region signature appears at 49-59 (ITPYDSTHLGH). Residues 188–193 (ERGGDP) carry the 'ERGGDP' region motif. Tryptophan 228 contributes to the L-cysteinyl-5'-AMP binding site. Residue cysteine 232 coordinates Zn(2+). Position 250-252 (250-252 (GSD)) interacts with L-cysteinyl-5'-AMP. Histidine 257 lines the Zn(2+) pocket. Residue isoleucine 284 coordinates L-cysteinyl-5'-AMP. The 'KMSKS' region motif lies at 290–294 (KMSKS).

Belongs to the class-I aminoacyl-tRNA synthetase family. MshC subfamily. In terms of assembly, monomer. Zn(2+) serves as cofactor.

The enzyme catalyses 1D-myo-inositol 2-amino-2-deoxy-alpha-D-glucopyranoside + L-cysteine + ATP = 1D-myo-inositol 2-(L-cysteinylamino)-2-deoxy-alpha-D-glucopyranoside + AMP + diphosphate + H(+). In terms of biological role, catalyzes the ATP-dependent condensation of GlcN-Ins and L-cysteine to form L-Cys-GlcN-Ins. The protein is L-cysteine:1D-myo-inositol 2-amino-2-deoxy-alpha-D-glucopyranoside ligase of Corynebacterium striatum.